The primary structure comprises 329 residues: DNA-directed RNA polymerase subunit alpha (329 aa).

The alpha N-terminal domain (alpha-NTD) stretch occupies residues 1-234 (MQGSVTEFLR…EQLDAFVELR (234 aa)). Positions 248–329 (FDPILLRPVD…WPPASLVDDL (82 aa)) are alpha C-terminal domain (alpha-CTD).

It belongs to the RNA polymerase alpha chain family. In terms of assembly, homodimer. The RNAP catalytic core consists of 2 alpha, 1 beta, 1 beta' and 1 omega subunit. When a sigma factor is associated with the core the holoenzyme is formed, which can initiate transcription.

It carries out the reaction RNA(n) + a ribonucleoside 5'-triphosphate = RNA(n+1) + diphosphate. Functionally, DNA-dependent RNA polymerase catalyzes the transcription of DNA into RNA using the four ribonucleoside triphosphates as substrates. In Shewanella violacea (strain JCM 10179 / CIP 106290 / LMG 19151 / DSS12), this protein is DNA-directed RNA polymerase subunit alpha.